A 521-amino-acid chain; its full sequence is uncharacterized protein (521 aa).

Polar residues predominate over residues 1–15 (MLSFRNQPGNPSGNL). A disordered region spans residues 1 to 20 (MLSFRNQPGNPSGNLTFGGV).

This is an uncharacterized protein from Micromonas pusilla (Picoplanktonic green alga).